The primary structure comprises 183 residues: Adenylate kinase (183 aa).

12–17 (GAGKGT) serves as a coordination point for ATP. The segment at 32 to 61 (STGDLLRSEVSAGSALGQEAEAVMNRGELV) is NMP. AMP contacts are provided by residues Thr-33, Arg-38, 59–61 (ELV), 86–89 (GFPR), and Gln-93. Residues 127–133 (ARGRADD) are LID. Arg-128 lines the ATP pocket. AMP-binding residues include Arg-130 and Arg-141. Gly-169 provides a ligand contact to ATP.

This sequence belongs to the adenylate kinase family. As to quaternary structure, monomer.

It localises to the cytoplasm. It catalyses the reaction AMP + ATP = 2 ADP. Its pathway is purine metabolism; AMP biosynthesis via salvage pathway; AMP from ADP: step 1/1. Functionally, catalyzes the reversible transfer of the terminal phosphate group between ATP and AMP. Plays an important role in cellular energy homeostasis and in adenine nucleotide metabolism. The protein is Adenylate kinase of Synechococcus sp. (strain WH7803).